We begin with the raw amino-acid sequence, 664 residues long: Translation factor guf1, mitochondrial (664 aa).

A mitochondrion-targeting transit peptide spans 1 to 43 (MRGCLQLARWLSAAPKGTAASLTRAPFGLANATRFFTNSAARA). Residues 66-246 (ERYRNFCIVA…TVVDKIPAPI (181 aa)) enclose the tr-type G domain. GTP contacts are provided by residues 75–82 (AHVDHGKS), 139–143 (DTPGH), and 193–196 (NKVD).

It belongs to the TRAFAC class translation factor GTPase superfamily. Classic translation factor GTPase family. LepA subfamily.

It is found in the mitochondrion inner membrane. The catalysed reaction is GTP + H2O = GDP + phosphate + H(+). Functionally, promotes mitochondrial protein synthesis. May act as a fidelity factor of the translation reaction, by catalyzing a one-codon backward translocation of tRNAs on improperly translocated ribosomes. Binds to mitochondrial ribosomes in a GTP-dependent manner. This chain is Translation factor guf1, mitochondrial (guf1), found in Aspergillus clavatus (strain ATCC 1007 / CBS 513.65 / DSM 816 / NCTC 3887 / NRRL 1 / QM 1276 / 107).